The primary structure comprises 642 residues: Chaperone protein DnaK (642 aa).

Phosphothreonine; by autocatalysis is present on Thr200. Residues 600 to 616 (EAAQQSAGAAGPMPGAP) are compositionally biased toward low complexity. The tract at residues 600-642 (EAAQQSAGAAGPMPGAPAEEEPSDGPRKAKGRVVDAEIVDDDK) is disordered. Residues 623–634 (DGPRKAKGRVVD) are compositionally biased toward basic and acidic residues.

The protein belongs to the heat shock protein 70 family.

Acts as a chaperone. The polypeptide is Chaperone protein DnaK (Akkermansia muciniphila (strain ATCC BAA-835 / DSM 22959 / JCM 33894 / BCRC 81048 / CCUG 64013 / CIP 107961 / Muc)).